A 269-amino-acid polypeptide reads, in one-letter code: MTTAPFVSPSLPRLHSARASPFPKPSVGSGGGVAFPARTYGSSLRLRSAVMSASGVGGNGSPMAPEESTVSSRLGEVKRVTKETNVHVKINLDGTGVANSSTGIPFLDHMLDQLASHGLFDVYVKATGDTHIDDHHSNEDIALAIGTALLQALGDRKGINRFGHFTAPLDEAAVEVILDLSGRPHLSCGLSIPTERVGTYDTQLVEHFFQSLVNTSGMTLHIRQLAGNNSHHIIEATFKAFARALRQATEYDLRRQGTIPSSKGVLSRS.

Disordered stretches follow at residues methionine 1–glycine 31 and serine 54–arginine 73. The transit peptide at methionine 1–serine 52 directs the protein to the chloroplast. Substrate contacts are provided by residues glutamate 83, histidine 109–histidine 117, histidine 135–glutamate 139, arginine 161, and arginine 183. Histidine 109, histidine 135, histidine 136, and glutamate 139 together coordinate Mn(2+). Positions 207, 231, 232, and 235 each coordinate Mn(2+). Residues histidine 231–lysine 239 and serine 261–lysine 263 contribute to the substrate site.

This sequence belongs to the imidazoleglycerol-phosphate dehydratase family. Mn(2+) is required as a cofactor.

The protein resides in the plastid. The protein localises to the chloroplast. It carries out the reaction D-erythro-1-(imidazol-4-yl)glycerol 3-phosphate = 3-(imidazol-4-yl)-2-oxopropyl phosphate + H2O. It participates in amino-acid biosynthesis; L-histidine biosynthesis; L-histidine from 5-phospho-alpha-D-ribose 1-diphosphate: step 6/9. The polypeptide is Imidazoleglycerol-phosphate dehydratase 1, chloroplastic (Triticum aestivum (Wheat)).